Reading from the N-terminus, the 227-residue chain is TMF-regulated nuclear protein 1 (227 aa).

2 disordered regions span residues Met-1–Arg-72 and Gly-200–Arg-227. Residues Ser-22–Pro-55 are compositionally biased toward pro residues.

In terms of assembly, interacts with TMF1; may regulate TRNP1 proteasomal degradation. Post-translationally, ubiquitinated, leading to its degradation by the proteasome.

It is found in the nucleus. Its function is as follows. DNA-binding factor that regulates the expression of a subset of genes and plays a key role in tangential, radial, and lateral expansion of the brain neocortex. Regulates neural stem cells proliferation and the production of intermediate neural progenitors and basal radial glial cells affecting the process of cerebral cortex gyrification. May control the proliferation rate of cells by regulating their progression through key cell-cycle transition points. The polypeptide is TMF-regulated nuclear protein 1 (TRNP1) (Homo sapiens (Human)).